The following is a 539-amino-acid chain: Protein PNS1 (539 aa).

Residues 1-38 (MPLNEKYERPPQPPPAYDPNHRPPSSSENSAAANVNDG) are disordered. Topologically, residues 1 to 81 (MPLNEKYERP…NDNKPRWNDW (81 aa)) are cytoplasmic. Positions 25-36 (SSSENSAAANVN) are enriched in low complexity. The chain crosses the membrane as a helical span at residues 82-102 (PFTIFFLCTVGGFIAIAAITL). Topologically, residues 103 to 129 (RAWSQTYSSTGSGIYDGVNTGTLNTNA) are extracellular. A helical transmembrane segment spans residues 130 to 150 (AILLVFVCIIALVFSVLGLTL). Residues 151 to 157 (CRIFPKQ) lie on the Cytoplasmic side of the membrane. Residues 158-178 (FIYCGMVINLVASLGTAIMYM) traverse the membrane as a helical segment. The Extracellular segment spans residues 179–182 (SLRY). Residues 183-203 (WSAGIVFLVFTFMTAWCYWGM) form a helical membrane-spanning segment. The Cytoplasmic segment spans residues 204 to 226 (RSRIPLSVAVLKVVVDAMKKCPQ). Residues 227–247 (IFFVSFVGALVASAFGFLFSA) form a helical membrane-spanning segment. At 248 to 274 (VIVATYIKYDPNSSNGGCDVSGGSCSH) the chain is on the extracellular side. Asn259 carries N-linked (GlcNAc...) asparagine glycosylation. A helical transmembrane segment spans residues 275–295 (SKLIGVLVVVFFCGYYISEVI). The Cytoplasmic portion of the chain corresponds to 296–332 (RNVIHCVISGVFGSWYYMSKSDQGMPRWPAFGALKRA). The helical transmembrane segment at 333–353 (MTYSFGSICFGSLLVALIDLL) threads the bilayer. Topologically, residues 354-371 (RQILQMIRHDVTSSGGGQ) are extracellular. Residues 372-392 (IAIQILFMVFDWIIGFLKWLA) form a helical membrane-spanning segment. At 393-436 (EYFNHYAYSFIALYGKPYLRAAKETWYMLREKGMDALINDNLIN) the chain is on the cytoplasmic side. A helical transmembrane segment spans residues 437-457 (IALGLFSMFASYMTALFTFLY). Topologically, residues 458–473 (LRFTSPQYNSNGAYNG) are extracellular. A helical membrane pass occupies residues 474 to 494 (ALMAFSFVIALQICNIATEAI). Topologically, residues 495–539 (RSGTATFFVALGNDPEVFHHSYPHRFDEIFRAYPDVLRKLSHQNV) are cytoplasmic.

The protein belongs to the CTL (choline transporter-like) family.

The protein localises to the cell membrane. In terms of biological role, probably involved in transport through the plasma membrane. This Saccharomyces cerevisiae (strain ATCC 204508 / S288c) (Baker's yeast) protein is Protein PNS1 (PNS1).